The chain runs to 356 residues: 3-dehydroquinate synthase (356 aa).

NAD(+) contacts are provided by residues 106–110 (GVVGD), 130–131 (TT), K143, and K152. Zn(2+) contacts are provided by E185, H248, and H265.

It belongs to the sugar phosphate cyclases superfamily. Dehydroquinate synthase family. The cofactor is Co(2+). Zn(2+) serves as cofactor. NAD(+) is required as a cofactor.

It localises to the cytoplasm. It catalyses the reaction 7-phospho-2-dehydro-3-deoxy-D-arabino-heptonate = 3-dehydroquinate + phosphate. It functions in the pathway metabolic intermediate biosynthesis; chorismate biosynthesis; chorismate from D-erythrose 4-phosphate and phosphoenolpyruvate: step 2/7. Functionally, catalyzes the conversion of 3-deoxy-D-arabino-heptulosonate 7-phosphate (DAHP) to dehydroquinate (DHQ). The chain is 3-dehydroquinate synthase from Thermoanaerobacter pseudethanolicus (strain ATCC 33223 / 39E) (Clostridium thermohydrosulfuricum).